The sequence spans 137 residues: MPKYQFQVQVQVQPQYLPDQSAPDEGVYSFAYTITITNTGDVTAQLISRHWIISDANGHTEQVKGLGVVGQQPLLKPGEAFQYTSGCRLRTASGSMHGSYFCVAEDGEPFTCPIELFVLEAFSPGQPGQPMAARVLH.

The ApaG domain occupies P2 to Q126.

This chain is Protein ApaG, found in Acidovorax sp. (strain JS42).